The sequence spans 293 residues: 4-hydroxy-tetrahydrodipicolinate synthase (293 aa).

A pyruvate-binding site is contributed by Thr-45. Tyr-133 serves as the catalytic Proton donor/acceptor. Lys-162 acts as the Schiff-base intermediate with substrate in catalysis. Ile-204 contacts pyruvate.

Belongs to the DapA family. In terms of assembly, homotetramer; dimer of dimers.

The protein resides in the cytoplasm. It catalyses the reaction L-aspartate 4-semialdehyde + pyruvate = (2S,4S)-4-hydroxy-2,3,4,5-tetrahydrodipicolinate + H2O + H(+). It functions in the pathway amino-acid biosynthesis; L-lysine biosynthesis via DAP pathway; (S)-tetrahydrodipicolinate from L-aspartate: step 3/4. Catalyzes the condensation of (S)-aspartate-beta-semialdehyde [(S)-ASA] and pyruvate to 4-hydroxy-tetrahydrodipicolinate (HTPA). The sequence is that of 4-hydroxy-tetrahydrodipicolinate synthase from Chelativorans sp. (strain BNC1).